A 502-amino-acid polypeptide reads, in one-letter code: Glycerol kinase (502 aa).

An ADP-binding site is contributed by Thr14. 3 residues coordinate ATP: Thr14, Thr15, and Ser16. Residue Thr14 coordinates sn-glycerol 3-phosphate. Position 18 (Arg18) interacts with ADP. 3 residues coordinate sn-glycerol 3-phosphate: Arg84, Glu85, and Tyr136. Arg84, Glu85, and Tyr136 together coordinate glycerol. Position 232 is a phosphohistidine; by HPr (His232). Asp246 serves as a coordination point for sn-glycerol 3-phosphate. The glycerol site is built by Asp246 and Gln247. ADP is bound by residues Thr268 and Gly311. ATP is bound by residues Thr268, Gly311, Gln315, and Gly412. 2 residues coordinate ADP: Gly412 and Asn416.

This sequence belongs to the FGGY kinase family. As to quaternary structure, homotetramer and homodimer (in equilibrium). The phosphoenolpyruvate-dependent sugar phosphotransferase system (PTS), including enzyme I, and histidine-containing protein (HPr) are required for the phosphorylation, which leads to the activation of the enzyme.

It catalyses the reaction glycerol + ATP = sn-glycerol 3-phosphate + ADP + H(+). The protein operates within polyol metabolism; glycerol degradation via glycerol kinase pathway; sn-glycerol 3-phosphate from glycerol: step 1/1. With respect to regulation, activated by phosphorylation and inhibited by fructose 1,6-bisphosphate (FBP). Key enzyme in the regulation of glycerol uptake and metabolism. Catalyzes the phosphorylation of glycerol to yield sn-glycerol 3-phosphate. The chain is Glycerol kinase from Streptococcus pneumoniae (strain P1031).